The sequence spans 476 residues: Lactate utilization protein B (476 aa).

4Fe-4S ferredoxin-type domains follow at residues 304-334 (GGEF…GHTY) and 353-382 (YDDF…LHQL). [4Fe-4S] cluster is bound by residues Cys313, Cys316, Cys319, Cys323, Cys366, Cys369, and Cys373. Residues 452-476 (RDFPAPNKNSFRNWMKHRTKGDEES) form a disordered region.

This sequence belongs to the LutB/YkgF family.

Functionally, is involved in L-lactate degradation and allows cells to grow with lactate as the sole carbon source. Has probably a role as an electron transporter during oxidation of L-lactate. The protein is Lactate utilization protein B of Lysinibacillus sphaericus (strain C3-41).